Here is a 516-residue protein sequence, read N- to C-terminus: Monocarboxylate transporter 12 (516 aa).

Residues 1–50 (MPSGSHWTANSSKIITWLLEQPGKEEKRKTMAKVNRARSTSPPDGGWGWM) are Cytoplasmic-facing. 12 consecutive transmembrane segments (helical) span residues 51-73 (IVAGCFLVTICTRAVTRCISIFF), 88-108 (AWIHSIVDCVTMLCAPLGSVV), 116-136 (VGIMLGGLLASTGLILSSFAT), 145-165 (LGVLTGLGFALCYSPAIAMVG), 178-198 (IAMSGSGIGTFILAPVVQLLI), 207-227 (LLILGGFVLNLCVCGALMRPI), 283-303 (FVVLAVSVLFMAYGCSPLFVY), 319-339 (AFLMSILGVIDIIGNITFGWL), 350-370 (YVCYLFAVGMDGLCYLCLPML), 377-397 (VPFSCTFGYFDGAYVTLIPVV), 410-430 (ALGVVYFLHAVPYLVSPPIAG), and 440-460 (TAAFLLCGFSMIFSSVLLGFA). The Cytoplasmic segment spans residues 461 to 516 (RLIKRMRKTQLQFIAKESDPKLQLWTNGSVAYSVARELDQKHGEPVATAVPGYSLT).

The protein belongs to the major facilitator superfamily. Monocarboxylate porter (TC 2.A.1.13) family. As to quaternary structure, interacts with isoform 2 of BSG; this interaction is required for its localization to the plasma membrane. Most highly expressed in kidney, followed by retina, lung, heart and testis. Very weakly expressed in brain and liver. Also detected in lens.

It localises to the cell membrane. The protein resides in the basolateral cell membrane. The enzyme catalyses creatine(in) = creatine(out). The catalysed reaction is guanidinoacetate(in) = guanidinoacetate(out). With respect to regulation, creatine uptake is inhibited by carbonyl cyanide 3-chlorophenylhydrazone (CCCP) and by valinomycin. Functionally, functions as a transporter for creatine and as well for its precursor guanidinoacetate. Transport of creatine and GAA is independent of resting membrane potential and extracellular Na(+), Cl(-), or pH. Contributes to the process of creatine biosynthesis and distribution. The sequence is that of Monocarboxylate transporter 12 from Homo sapiens (Human).